Reading from the N-terminus, the 122-residue chain is uncharacterized protein (122 aa).

Residues 1-24 (MKNRKFSNLLLLRLRILCFNKKPA) are Cytoplasmic-facing. A helical transmembrane segment spans residues 25–45 (FAATSYAFFFRNFSVLIFIMV). The Extracellular segment spans residues 46–57 (PDEKENGAAADN). A helical transmembrane segment spans residues 58 to 78 (SFSLLIGRGVVLFLFYCPTAL). At 79-122 (KMHGPVPAHWFCDKNIEAIQSDGQIRLLRSGPFPWSHGTCIRGA) the chain is on the cytoplasmic side.

Its subcellular location is the membrane. This is an uncharacterized protein from Saccharomyces cerevisiae (strain ATCC 204508 / S288c) (Baker's yeast).